Reading from the N-terminus, the 99-residue chain is MISEARLLQVILAPHISEKGTLSAENHNTMVFKVAGTATKAEIKAAVQKLFEVEVTGVRTLNVKGKTKRTGQRVGRRSDWKKAYVSLVEGADIDFAGAE.

This sequence belongs to the universal ribosomal protein uL23 family. Part of the 50S ribosomal subunit. Contacts protein L29, and trigger factor when it is bound to the ribosome.

In terms of biological role, one of the early assembly proteins it binds 23S rRNA. One of the proteins that surrounds the polypeptide exit tunnel on the outside of the ribosome. Forms the main docking site for trigger factor binding to the ribosome. The protein is Large ribosomal subunit protein uL23 of Psychromonas ingrahamii (strain DSM 17664 / CCUG 51855 / 37).